The sequence spans 435 residues: Probable xyloglucan galactosyltransferase GT19 (435 aa).

Topologically, residues 1 to 6 are cytoplasmic; sequence MASKST. A helical; Signal-anchor for type II membrane protein transmembrane segment spans residues 7–23; that stretch reads VTTLTIFFFFFFFFIEP. The Lumenal segment spans residues 24–435; that stretch reads KVQSQQISAV…GVLDRIISRV (412 aa). 3 N-linked (GlcNAc...) asparagine glycosylation sites follow: Asn-140, Asn-203, and Asn-277.

This sequence belongs to the glycosyltransferase 47 family. In terms of tissue distribution, expressed in roots, hypocotyls, cotyledons, leaves, stems, stamens and pollen grains.

It is found in the golgi apparatus membrane. In terms of biological role, functions in xyloglucan synthesis by adding side chains to the xylosylated glucan backbone. Involved in the galactosylation of hemicellulose xyloglucan. The chain is Probable xyloglucan galactosyltransferase GT19 from Arabidopsis thaliana (Mouse-ear cress).